The primary structure comprises 186 residues: Cell division protein SepF (186 aa).

Residues 24–91 form a disordered region; sequence EDEEEEERYA…HNPPHLRAVP (68 aa).

The protein belongs to the SepF family. As to quaternary structure, homodimer. Interacts with FtsZ.

The protein resides in the cytoplasm. Its function is as follows. Cell division protein that is part of the divisome complex and is recruited early to the Z-ring. Probably stimulates Z-ring formation, perhaps through the cross-linking of FtsZ protofilaments. Its function overlaps with FtsA. The polypeptide is Cell division protein SepF (Rubrobacter xylanophilus (strain DSM 9941 / JCM 11954 / NBRC 16129 / PRD-1)).